The chain runs to 150 residues: Macrodomain Ter protein (150 aa).

It belongs to the MatP family. In terms of assembly, homodimer.

It localises to the cytoplasm. In terms of biological role, required for spatial organization of the terminus region of the chromosome (Ter macrodomain) during the cell cycle. Prevents early segregation of duplicated Ter macrodomains during cell division. Binds specifically to matS, which is a 13 bp signature motif repeated within the Ter macrodomain. In Salmonella agona (strain SL483), this protein is Macrodomain Ter protein.